A 346-amino-acid polypeptide reads, in one-letter code: Blue-light-activated histidine kinase 2 (346 aa).

The PAS domain maps to 8 to 82 (HDKEAWGRLP…KAIRNCEEVE (75 aa)). S-4a-FMN cysteine is present on Cys55. The 55-residue stretch at 79–133 (EEVEETIYNYRADGEGFWNHLLMGPLEDQDEKCRYFVGIQVDMGQSESPDRATEL) folds into the PAC domain. The Histidine kinase domain maps to 139–334 (EVQHRVKNHL…IVNIDIPLSQ (196 aa)). The residue at position 142 (His142) is a Phosphohistidine; by autocatalysis.

In terms of processing, FMN binds covalently to cysteine after exposure to blue light and this bond is spontaneously broken in the dark.

It catalyses the reaction ATP + protein L-histidine = ADP + protein N-phospho-L-histidine.. Photosensitive kinase that is involved in increased bacterial virulence upon exposure to light. The sequence is that of Blue-light-activated histidine kinase 2 from Erythrobacter litoralis (strain HTCC2594).